A 128-amino-acid polypeptide reads, in one-letter code: Large ribosomal subunit protein uL18 (128 aa).

A disordered region spans residues 1–36; that stretch reads MAKRSSLTRRGVSPRAAARARRHMRVRKKVRGTPER. Residues 18 to 31 are compositionally biased toward basic residues; it reads ARARRHMRVRKKVR.

Belongs to the universal ribosomal protein uL18 family. In terms of assembly, part of the 50S ribosomal subunit; part of the 5S rRNA/L5/L18/L25 subcomplex. Contacts the 5S and 23S rRNAs.

Its function is as follows. This is one of the proteins that bind and probably mediate the attachment of the 5S RNA into the large ribosomal subunit, where it forms part of the central protuberance. In Thermobifida fusca (strain YX), this protein is Large ribosomal subunit protein uL18.